The chain runs to 111 residues: Secreted RxLR effector protein 81 (111 aa).

The signal sequence occupies residues 1 to 16; it reads MLVSMLLIIFPNGVSL. Asparagine 52 is a glycosylation site (N-linked (GlcNAc...) asparagine). A disordered region spans residues 73 to 92; it reads KKFSSSDEDKSRDVRRRLRP. Positions 88 to 91 match the RxLR-dEER motif; the sequence is RRLR.

Belongs to the RxLR effector family.

It localises to the secreted. Its subcellular location is the host nucleus. The protein localises to the host cytoplasm. Its function is as follows. Secreted effector that partially suppresses the host cell death induced by cell death-inducing proteins. This is Secreted RxLR effector protein 81 from Plasmopara viticola (Downy mildew of grapevine).